The following is a 335-amino-acid chain: Holliday junction branch migration complex subunit RuvB (335 aa).

Positions 1-181 are large ATPase domain (RuvB-L); the sequence is MSERVISPEP…FGLLIRLNLY (181 aa). Residues Leu20, Arg21, Gly62, Lys65, Thr66, Thr67, 128–130, Arg171, Tyr181, and Arg218 each bind ATP; that span reads EDF. Mg(2+) is bound at residue Thr66. The interval 182-252 is small ATPAse domain (RuvB-S); the sequence is SPEDLEKIVT…IAGAGLALLQ (71 aa). The interval 255-335 is head domain (RuvB-H); sequence ELGLDDIDRR…KLNHSQKTLF (81 aa). Residues Arg310 and Arg315 each contribute to the DNA site.

Belongs to the RuvB family. Homohexamer. Forms an RuvA(8)-RuvB(12)-Holliday junction (HJ) complex. HJ DNA is sandwiched between 2 RuvA tetramers; dsDNA enters through RuvA and exits via RuvB. An RuvB hexamer assembles on each DNA strand where it exits the tetramer. Each RuvB hexamer is contacted by two RuvA subunits (via domain III) on 2 adjacent RuvB subunits; this complex drives branch migration. In the full resolvosome a probable DNA-RuvA(4)-RuvB(12)-RuvC(2) complex forms which resolves the HJ.

The protein localises to the cytoplasm. The catalysed reaction is ATP + H2O = ADP + phosphate + H(+). Its function is as follows. The RuvA-RuvB-RuvC complex processes Holliday junction (HJ) DNA during genetic recombination and DNA repair, while the RuvA-RuvB complex plays an important role in the rescue of blocked DNA replication forks via replication fork reversal (RFR). RuvA specifically binds to HJ cruciform DNA, conferring on it an open structure. The RuvB hexamer acts as an ATP-dependent pump, pulling dsDNA into and through the RuvAB complex. RuvB forms 2 homohexamers on either side of HJ DNA bound by 1 or 2 RuvA tetramers; 4 subunits per hexamer contact DNA at a time. Coordinated motions by a converter formed by DNA-disengaged RuvB subunits stimulates ATP hydrolysis and nucleotide exchange. Immobilization of the converter enables RuvB to convert the ATP-contained energy into a lever motion, pulling 2 nucleotides of DNA out of the RuvA tetramer per ATP hydrolyzed, thus driving DNA branch migration. The RuvB motors rotate together with the DNA substrate, which together with the progressing nucleotide cycle form the mechanistic basis for DNA recombination by continuous HJ branch migration. Branch migration allows RuvC to scan DNA until it finds its consensus sequence, where it cleaves and resolves cruciform DNA. The protein is Holliday junction branch migration complex subunit RuvB of Methanoregula boonei (strain DSM 21154 / JCM 14090 / 6A8).